A 171-amino-acid chain; its full sequence is 3-hydroxydecanoyl-[acyl-carrier-protein] dehydratase (171 aa).

His-70 is an active-site residue.

This sequence belongs to the thioester dehydratase family. FabA subfamily. Homodimer.

The protein resides in the cytoplasm. It catalyses the reaction a (3R)-hydroxyacyl-[ACP] = a (2E)-enoyl-[ACP] + H2O. The catalysed reaction is (3R)-hydroxydecanoyl-[ACP] = (2E)-decenoyl-[ACP] + H2O. It carries out the reaction (2E)-decenoyl-[ACP] = (3Z)-decenoyl-[ACP]. Its pathway is lipid metabolism; fatty acid biosynthesis. In terms of biological role, necessary for the introduction of cis unsaturation into fatty acids. Catalyzes the dehydration of (3R)-3-hydroxydecanoyl-ACP to E-(2)-decenoyl-ACP and then its isomerization to Z-(3)-decenoyl-ACP. Can catalyze the dehydratase reaction for beta-hydroxyacyl-ACPs with saturated chain lengths up to 16:0, being most active on intermediate chain length. The protein is 3-hydroxydecanoyl-[acyl-carrier-protein] dehydratase of Shewanella oneidensis (strain ATCC 700550 / JCM 31522 / CIP 106686 / LMG 19005 / NCIMB 14063 / MR-1).